Here is a 123-residue protein sequence, read N- to C-terminus: Small ribosomal subunit protein uS13 (123 aa).

The tract at residues 97–123 (PVRGQRTKTNARTRKGPRKTVGVRRKK) is disordered.

Belongs to the universal ribosomal protein uS13 family. In terms of assembly, part of the 30S ribosomal subunit. Forms a loose heterodimer with protein S19. Forms two bridges to the 50S subunit in the 70S ribosome.

Its function is as follows. Located at the top of the head of the 30S subunit, it contacts several helices of the 16S rRNA. In the 70S ribosome it contacts the 23S rRNA (bridge B1a) and protein L5 of the 50S subunit (bridge B1b), connecting the 2 subunits; these bridges are implicated in subunit movement. Contacts the tRNAs in the A and P-sites. The chain is Small ribosomal subunit protein uS13 from Pelotomaculum thermopropionicum (strain DSM 13744 / JCM 10971 / SI).